The sequence spans 661 residues: Threonine--tRNA ligase (661 aa).

The region spanning 1–64 (MSQAISLTFP…TTGRIEIITR (64 aa)) is the TGS domain. Residues 245 to 546 (DHRRLGREMD…LIENFAGHMP (302 aa)) are catalytic. Zn(2+) is bound by residues Cys-341, His-392, and His-523.

It belongs to the class-II aminoacyl-tRNA synthetase family. As to quaternary structure, homodimer. Zn(2+) is required as a cofactor.

The protein resides in the cytoplasm. The enzyme catalyses tRNA(Thr) + L-threonine + ATP = L-threonyl-tRNA(Thr) + AMP + diphosphate + H(+). In terms of biological role, catalyzes the attachment of threonine to tRNA(Thr) in a two-step reaction: L-threonine is first activated by ATP to form Thr-AMP and then transferred to the acceptor end of tRNA(Thr). Also edits incorrectly charged L-seryl-tRNA(Thr). In Rhizobium johnstonii (strain DSM 114642 / LMG 32736 / 3841) (Rhizobium leguminosarum bv. viciae), this protein is Threonine--tRNA ligase.